A 344-amino-acid polypeptide reads, in one-letter code: Protein RecA (344 aa).

65-72 (GPESSGKT) contacts ATP.

This sequence belongs to the RecA family.

It is found in the cytoplasm. Functionally, can catalyze the hydrolysis of ATP in the presence of single-stranded DNA, the ATP-dependent uptake of single-stranded DNA by duplex DNA, and the ATP-dependent hybridization of homologous single-stranded DNAs. It interacts with LexA causing its activation and leading to its autocatalytic cleavage. The sequence is that of Protein RecA from Nitratiruptor sp. (strain SB155-2).